We begin with the raw amino-acid sequence, 305 residues long: Glycine cleavage system transcriptional activator (305 aa).

Residues Pro-6 to Thr-63 enclose the HTH lysR-type domain. The segment at residues Phe-23–Lys-42 is a DNA-binding region (H-T-H motif).

It belongs to the LysR transcriptional regulatory family.

Its subcellular location is the cytoplasm. In terms of biological role, regulatory protein for the glycine cleavage system operon (gcv). Mediates activation of gcv by glycine and repression by purines. GcvA is negatively autoregulated. Binds to three sites upstream of the gcv promoter. The polypeptide is Glycine cleavage system transcriptional activator (gcvA) (Escherichia coli O157:H7).